Consider the following 392-residue polypeptide: Succinyl-diaminopimelate desuccinylase (392 aa).

His-76 is a binding site for Zn(2+). The active site involves Asp-78. Asp-107 is a binding site for Zn(2+). Glu-143 (proton acceptor) is an active-site residue. Zn(2+) is bound by residues Glu-144, Glu-172, and His-357.

The protein belongs to the peptidase M20A family. DapE subfamily. In terms of assembly, homodimer. Zn(2+) serves as cofactor. It depends on Co(2+) as a cofactor.

The enzyme catalyses N-succinyl-(2S,6S)-2,6-diaminopimelate + H2O = (2S,6S)-2,6-diaminopimelate + succinate. It functions in the pathway amino-acid biosynthesis; L-lysine biosynthesis via DAP pathway; LL-2,6-diaminopimelate from (S)-tetrahydrodipicolinate (succinylase route): step 3/3. In terms of biological role, catalyzes the hydrolysis of N-succinyl-L,L-diaminopimelic acid (SDAP), forming succinate and LL-2,6-diaminopimelate (DAP), an intermediate involved in the bacterial biosynthesis of lysine and meso-diaminopimelic acid, an essential component of bacterial cell walls. The sequence is that of Succinyl-diaminopimelate desuccinylase from Helicobacter hepaticus (strain ATCC 51449 / 3B1).